A 143-amino-acid polypeptide reads, in one-letter code: Small ribosomal subunit protein bS6 (143 aa).

A disordered region spans residues 98-143 (TEQSLIMKSKDEKGDKPERSERRRRDDEEGEAPAANDNDGDNAEAA). The segment covering 105 to 124 (KSKDEKGDKPERSERRRRDD) has biased composition (basic and acidic residues).

Belongs to the bacterial ribosomal protein bS6 family.

Binds together with bS18 to 16S ribosomal RNA. This Xanthomonas euvesicatoria pv. vesicatoria (strain 85-10) (Xanthomonas campestris pv. vesicatoria) protein is Small ribosomal subunit protein bS6.